The following is a 602-amino-acid chain: Translation factor GUF1 homolog, organellar chromatophore (602 aa).

One can recognise a tr-type G domain in the interval 7–189; sequence SRIRNFCIIA…AIVERIPPPV (183 aa). Residues 16–23, 82–86, and 136–139 contribute to the GTP site; these read AHIDHGKS, DTPGH, and NKID.

This sequence belongs to the TRAFAC class translation factor GTPase superfamily. Classic translation factor GTPase family. LepA subfamily.

Its subcellular location is the plastid. The protein resides in the organellar chromatophore. The catalysed reaction is GTP + H2O = GDP + phosphate + H(+). In terms of biological role, promotes protein synthesis. May act as a fidelity factor of the translation reaction, by catalyzing a one-codon backward translocation of tRNAs on improperly translocated ribosomes. In Paulinella chromatophora, this protein is Translation factor GUF1 homolog, organellar chromatophore.